The primary structure comprises 388 residues: UPF0229 protein BH1031 (388 aa).

A disordered region spans residues 80-117 (HVGQGDGDSQVGDVIARDPSAGQQGPGKGQGAGDQPGE). Positions 103–113 (QGPGKGQGAGD) are enriched in gly residues.

The protein belongs to the UPF0229 family.

In Halalkalibacterium halodurans (strain ATCC BAA-125 / DSM 18197 / FERM 7344 / JCM 9153 / C-125) (Bacillus halodurans), this protein is UPF0229 protein BH1031.